The following is a 191-amino-acid chain: MIGRITGTLAAKQPPQVLVDVNGVCYEIDVPMSTFYNLPGIGEKVALLTHLAIREDAHLLYGFGSEVERAAFRELLKVSGIGAKTALSVLSGLSVNDLSAAIAAQEIGRIVKVPGIGKKTAERLLLELKGKPVFAGALASVPSAGASDDVRQALLALGYNERETAATVRELPAGLAVGEAIRQALRALSRA.

Residues 1–64 are domain I; sequence MIGRITGTLA…EDAHLLYGFG (64 aa). A domain II region spans residues 65-138; it reads SEVERAAFRE…KGKPVFAGAL (74 aa). Positions 138 to 141 are flexible linker; sequence LASV. Residues 142 to 191 form a domain III region; that stretch reads PSAGASDDVRQALLALGYNERETAATVRELPAGLAVGEAIRQALRALSRA.

It belongs to the RuvA family. In terms of assembly, homotetramer. Forms an RuvA(8)-RuvB(12)-Holliday junction (HJ) complex. HJ DNA is sandwiched between 2 RuvA tetramers; dsDNA enters through RuvA and exits via RuvB. An RuvB hexamer assembles on each DNA strand where it exits the tetramer. Each RuvB hexamer is contacted by two RuvA subunits (via domain III) on 2 adjacent RuvB subunits; this complex drives branch migration. In the full resolvosome a probable DNA-RuvA(4)-RuvB(12)-RuvC(2) complex forms which resolves the HJ.

It localises to the cytoplasm. Functionally, the RuvA-RuvB-RuvC complex processes Holliday junction (HJ) DNA during genetic recombination and DNA repair, while the RuvA-RuvB complex plays an important role in the rescue of blocked DNA replication forks via replication fork reversal (RFR). RuvA specifically binds to HJ cruciform DNA, conferring on it an open structure. The RuvB hexamer acts as an ATP-dependent pump, pulling dsDNA into and through the RuvAB complex. HJ branch migration allows RuvC to scan DNA until it finds its consensus sequence, where it cleaves and resolves the cruciform DNA. This is Holliday junction branch migration complex subunit RuvA from Thiobacillus denitrificans (strain ATCC 25259 / T1).